Here is a 2276-residue protein sequence, read N- to C-terminus: Poly [ADP-ribose] polymerase tankyrase (2276 aa).

Basic residues-rich tracts occupy residues 1 to 15 and 87 to 98; these read MARR…VKAA and KAVKAPKVKAPS. Disordered regions lie at residues 1–20 and 79–103; these read MARR…KIDG and SSKT…KGND. ANK repeat units lie at residues 345 to 374, 378 to 407, 411 to 440, 461 to 490, 498 to 527, 531 to 560, 564 to 593, 598 to 627, 675 to 725, 729 to 758, 970 to 999, 1171 to 1200, 1204 to 1233, 1472 to 1501, and 1505 to 1535; these read KNIT…TINI, DNWY…SVTM, QTET…DLEK, SGNS…IVVD, NRLT…LVEG, KKRT…SLTL, SGNT…NILS, WQLY…KDKA, SGQT…KVDV, EDNT…NKRN, KDDV…EMHL, NGNT…HVDL, DGNT…DVTE, GLIP…SLKT, and YGRT…AVVL. Residues 1570-1649 form a disordered region; it reads VPARVESDEE…STGPKRKKLV (80 aa). Acidic residues-rich tracts occupy residues 1576–1590 and 1612–1622; these read SDEE…ESGE and SDDEDDDDDDS. One copy of the ANK 16 repeat lies at 1662–1706; sequence KENNPLHYFIEPLAWENVELLGDLAAANKTAIVQCLIDKRSPNPI. Positions 1788 to 1889 constitute a WGR domain; it reads GLVSFCDETQ…ANFRDMPKKY (102 aa). Positions 1910–2045 constitute a PARP alpha-helical domain; that stretch reads KNTEKDPIRR…EIETATRLLC (136 aa). Residues 2047 to 2276 enclose the PARP catalytic domain; sequence AEFRQDLDRV…VLPKYIVMYK (230 aa).

Expressed throughout the head and tail, in germ cells and somatic cells.

It localises to the nucleus. The protein localises to the chromosome. It carries out the reaction NAD(+) + (ADP-D-ribosyl)n-acceptor = nicotinamide + (ADP-D-ribosyl)n+1-acceptor + H(+).. It catalyses the reaction L-aspartyl-[protein] + NAD(+) = 4-O-(ADP-D-ribosyl)-L-aspartyl-[protein] + nicotinamide. The catalysed reaction is L-glutamyl-[protein] + NAD(+) = 5-O-(ADP-D-ribosyl)-L-glutamyl-[protein] + nicotinamide. Poly[ADP-ribose] polymerases modify various nuclear proteins by poly(ADP-ribosyl)ation, a post-translational modification synthesized after DNA damage that appears as an obligatory step in a detection/signaling pathway leading to the reparation of DNA strand breaks and programmed cell death. This is Poly [ADP-ribose] polymerase tankyrase from Caenorhabditis elegans.